Reading from the N-terminus, the 281-residue chain is Foldase protein PrsA (281 aa).

The first 18 residues, 1–18 (MKKWMMAAAVVSLMALSA), serve as a signal peptide directing secretion. The N-palmitoyl cysteine moiety is linked to residue Cys19. Cys19 carries the S-diacylglycerol cysteine lipid modification. The region spanning 133 to 223 (KPKIRASHIL…YGYHIIKVTD (91 aa)) is the PpiC domain.

The protein belongs to the PrsA family.

The protein localises to the cell membrane. It catalyses the reaction [protein]-peptidylproline (omega=180) = [protein]-peptidylproline (omega=0). Its function is as follows. Plays a major role in protein secretion by helping the post-translocational extracellular folding of several secreted proteins. This chain is Foldase protein PrsA, found in Geobacillus kaustophilus (strain HTA426).